Consider the following 306-residue polypeptide: Ribosomal protein L11 methyltransferase (306 aa).

Residues threonine 154, glycine 179, aspartate 201, and asparagine 242 each coordinate S-adenosyl-L-methionine.

The protein belongs to the methyltransferase superfamily. PrmA family.

The protein resides in the cytoplasm. The catalysed reaction is L-lysyl-[protein] + 3 S-adenosyl-L-methionine = N(6),N(6),N(6)-trimethyl-L-lysyl-[protein] + 3 S-adenosyl-L-homocysteine + 3 H(+). Its function is as follows. Methylates ribosomal protein L11. This Xylella fastidiosa (strain 9a5c) protein is Ribosomal protein L11 methyltransferase.